Consider the following 955-residue polypeptide: Eukaryotic translation initiation factor 3 subunit A (955 aa).

Positions 96-127 (LSLAEQRVTDAQAQADKIADEEEADDLEAEET) form a coiled coil. The 174-residue stretch at 325–498 (YQRVASFVLL…RSVLFEEVRA (174 aa)) folds into the PCI domain. 2 coiled-coil regions span residues 533 to 636 (AEAR…INAK) and 752 to 860 (KREA…KRAG). The segment covering 789-858 (RAEEEAKAAA…ELEAKLEAKR (70 aa)) has biased composition (basic and acidic residues). The tract at residues 789–955 (RAEEEAKAAA…GRYIPPSQRN (167 aa)) is disordered.

This sequence belongs to the eIF-3 subunit A family. As to quaternary structure, component of the eukaryotic translation initiation factor 3 (eIF-3) complex.

The protein resides in the cytoplasm. Functionally, RNA-binding component of the eukaryotic translation initiation factor 3 (eIF-3) complex, which is involved in protein synthesis of a specialized repertoire of mRNAs and, together with other initiation factors, stimulates binding of mRNA and methionyl-tRNAi to the 40S ribosome. The eIF-3 complex specifically targets and initiates translation of a subset of mRNAs involved in cell proliferation. This Yarrowia lipolytica (strain CLIB 122 / E 150) (Yeast) protein is Eukaryotic translation initiation factor 3 subunit A.